The sequence spans 153 residues: Putative phosphatidylglycerol/phosphatidylinositol transfer protein DDB_G0285639 (153 aa).

Positions 1 to 21 are cleaved as a signal peptide; it reads MIIKILLLIISISLFLNISIG. N-linked (GlcNAc...) asparagine glycans are attached at residues N17, N61, N87, N117, and N140.

Belongs to the NPC2 family. Monomer.

Its function is as follows. Catalyzes the intermembrane transfer of phosphatidylglycerol and phosphatidylinositol. This is Putative phosphatidylglycerol/phosphatidylinositol transfer protein DDB_G0285639 from Dictyostelium discoideum (Social amoeba).